A 206-amino-acid chain; its full sequence is Uridine kinase (206 aa).

Residue 11-18 (GGSGSGKT) participates in ATP binding.

The protein belongs to the uridine kinase family.

Its subcellular location is the cytoplasm. The catalysed reaction is uridine + ATP = UMP + ADP + H(+). The enzyme catalyses cytidine + ATP = CMP + ADP + H(+). Its pathway is pyrimidine metabolism; CTP biosynthesis via salvage pathway; CTP from cytidine: step 1/3. It participates in pyrimidine metabolism; UMP biosynthesis via salvage pathway; UMP from uridine: step 1/1. The chain is Uridine kinase from Macrococcus caseolyticus (strain JCSC5402) (Macrococcoides caseolyticum).